We begin with the raw amino-acid sequence, 508 residues long: Cytochrome P450 monooxygenase dmxR5 (508 aa).

Residues leucine 24–tyrosine 44 traverse the membrane as a helical segment. Residues asparagine 387 and asparagine 405 are each glycosylated (N-linked (GlcNAc...) asparagine). Cysteine 451 provides a ligand contact to heme. N-linked (GlcNAc...) asparagine glycosylation occurs at asparagine 462. The disordered stretch occupies residues glutamate 481–asparagine 508.

The protein belongs to the cytochrome P450 family. Heme serves as cofactor.

It localises to the membrane. The protein operates within secondary metabolite biosynthesis. In terms of biological role, cytochrome P450 monooxygenase; part of the gene cluster that mediates the biosynthesis of the dimeric xanthones cryptosporioptides. The pathway begins with the synthesis of atrochrysone thioester by the polyketide synthase dmx-nrPKS. The atrochrysone carboxyl ACP thioesterase dmxR1 then breaks the thioester bond and releases the atrochrysone carboxylic acid from dmx-nrPKS. Atrochrysone carboxylic acid is decarboxylated by the decarboxylase dmxR15, and oxidized by the anthrone oxygenase dmxR16 to yield emodin. Emodin is then reduced to emodin hydroquinone by the oxidoreductase dmxR7. A-ring reduction by the short chain dehydrogenase dmxR18, dehydration by the scytalone dehydratase-like protein dmxR17 and probable spontaneous re-oxidation, results in overall deoxygenation to chrysophanol. Baeyer-Villiger oxidation by the Baeyer-Villiger monooxygenase (BVMO) dmxR6 then yields monodictylactone in equilibrium with monodictyphenone. In the case of the cryptosporioptides biosynthesis, monodictylactone is reduced at C-12 to an alcohol (by the short chain dehydrogenases dmxR12 or dmxR8) and hydroxylated at C-5 by dmxR9, yielding the electron-rich aromatic which could eliminate H(2)O to form the ortho-quinonemethide, followed by tautomerisation to paraquinone and complete the formal reduction to produce the 10-methylgroup. Conjugate addition of C-4a-OH to the resulting paraquinone by the monooxygenase dmxR10 then gives cyclohexadienone, which is then reduced at C-5 by the short chain dehydrogenase dmxR3 to give the dihydroxanthone. The 6,7-epoxide in the cryptosporioptides could be introduced by the cytochrome P450 monooxygenase dmxL3. The highly reducing PKS dmxL2 manufactures butyrate, which is further carboxylated by dmxL1 to form ethylmalonate. It is not yet clear whether the carboxylation occurs while the butyrate is attached to the ACP of dmxL2, but this unusual fungal metabolite could then be esterified to O-5 by the O-acetyltransferase dmxR13. Finally, dimerization performed by dmxR5 gives the observed dimers cryptosporioptides A, B and C as the final products of the pathway. In Cryptosporiopsis sp. (strain 8999), this protein is Cytochrome P450 monooxygenase dmxR5.